We begin with the raw amino-acid sequence, 106 residues long: Large ribosomal subunit protein cL38 (106 aa).

A chloroplast-targeting transit peptide spans 1–39 (MSVSAIFGTGIVTVAASPVLRQFQVPKLGNGGGLGMVIE). Residues 42-70 (SRPQKKSTAHHRKTRPKKTQPWDIKRKPT) form a disordered region. Basic residues predominate over residues 44 to 59 (PQKKSTAHHRKTRPKK).

It belongs to the chloroplast-specific ribosomal protein cL38 family. As to quaternary structure, part of the 50S ribosomal subunit.

The protein localises to the plastid. Its subcellular location is the chloroplast. The chain is Large ribosomal subunit protein cL38 (PSRP6) from Arabidopsis thaliana (Mouse-ear cress).